Here is a 421-residue protein sequence, read N- to C-terminus: Mitochondrial tRNA-specific 2-thiouridylase 1 (421 aa).

ATP contacts are provided by residues 10–17 (ALSGGVDS) and Met-36. An interaction with target base in tRNA region spans residues 96-98 (NPD). Cys-101 functions as the Nucleophile in the catalytic mechanism. Cys-101 and Cys-222 are oxidised to a cystine. Gly-126 contributes to the ATP binding site. Positions 171–173 (KDQ) are interaction with tRNA. The active-site Cysteine persulfide intermediate is the Cys-222. The segment at 334–335 (RH) is interaction with tRNA. The segment at 395 to 421 (KGQRRAGMATESPSDSPEDGPGLSPLL) is disordered.

It belongs to the MnmA/TRMU family. Ubiquitous. Abundantly expressed in tissues with high metabolic rates including heart, liver, kidney, and brain.

The protein localises to the mitochondrion. It catalyses the reaction 5-taurinomethyluridine(34) in tRNA + S-sulfanyl-L-cysteinyl-[protein] + AH2 + ATP = 5-taurinomethyl-2-thiouridine(34) in tRNA + L-cysteinyl-[protein] + A + AMP + diphosphate + H(+). Functionally, catalyzes the 2-thiolation of uridine at the wobble position (U34) of mitochondrial tRNA(Lys), tRNA(Glu) and tRNA(Gln). Required for the formation of 5-taurinomethyl-2-thiouridine (tm5s2U) of mitochondrial tRNA(Lys), tRNA(Glu), and tRNA(Gln) at the wobble position. ATP is required to activate the C2 atom of the wobble base. This is Mitochondrial tRNA-specific 2-thiouridylase 1 (TRMU) from Homo sapiens (Human).